The sequence spans 130 residues: Histone H2A type 1-K (130 aa).

The tract at residues Met1–Ala22 is disordered. Ser2 carries the post-translational modification N-acetylserine. Ser2 bears the Phosphoserine; by RPS6KA5 mark. A Citrulline; alternate modification is found at Arg4. A Symmetric dimethylarginine; by PRMT5; alternate modification is found at Arg4. Residues Lys6 and Lys10 each carry the N6-(2-hydroxyisobutyryl)lysine; alternate modification. An N6-(beta-hydroxybutyryl)lysine; alternate modification is found at Lys6. 2 positions are modified to N6-acetyllysine; alternate: Lys6 and Lys10. Residues Gln7–Ser19 show a composition bias toward basic residues. Lys10 is subject to N6-lactoyllysine; alternate. At Lys10 the chain carries N6-succinyllysine; alternate. Glycyl lysine isopeptide (Lys-Gly) (interchain with G-Cter in ubiquitin) cross-links involve residues Lys14 and Lys16. Position 37 is an N6-(2-hydroxyisobutyryl)lysine; alternate (Lys37). Position 37 is an N6-(beta-hydroxybutyryl)lysine; alternate (Lys37). Lys37 is modified (N6-crotonyllysine; alternate). 2 positions are modified to N6-(2-hydroxyisobutyryl)lysine: Lys75 and Lys76. Position 96 is an N6-(2-hydroxyisobutyryl)lysine; alternate (Lys96). N6-succinyllysine; alternate is present on Lys96. Lys96 carries the N6-glutaryllysine; alternate modification. The residue at position 105 (Gln105) is an N5-methylglutamine. Residue Lys119 is modified to N6-(2-hydroxyisobutyryl)lysine; alternate. N6-crotonyllysine; alternate occurs at positions 119 and 120. 2 positions are modified to N6-glutaryllysine; alternate: Lys119 and Lys120. The residue at position 120 (Lys120) is an N6-(beta-hydroxybutyryl)lysine; alternate. Lys120 participates in a covalent cross-link: Glycyl lysine isopeptide (Lys-Gly) (interchain with G-Cter in ubiquitin); alternate. Thr121 carries the post-translational modification Phosphothreonine; by DCAF1. Lys126 carries the post-translational modification N6-(beta-hydroxybutyryl)lysine; alternate. Lys126 carries the N6-crotonyllysine; alternate modification. Lys126 carries the N6-glutaryllysine; alternate modification.

It belongs to the histone H2A family. As to quaternary structure, the nucleosome is a histone octamer containing two molecules each of H2A, H2B, H3 and H4 assembled in one H3-H4 heterotetramer and two H2A-H2B heterodimers. The octamer wraps approximately 147 bp of DNA. Post-translationally, deiminated on Arg-4 in granulocytes upon calcium entry. In terms of processing, monoubiquitination of Lys-120 (H2AK119Ub) by RING1, TRIM37 and RNF2/RING2 complex gives a specific tag for epigenetic transcriptional repression and participates in X chromosome inactivation of female mammals. It is involved in the initiation of both imprinted and random X inactivation. Ubiquitinated H2A is enriched in inactive X chromosome chromatin. Ubiquitination of H2A functions downstream of methylation of 'Lys-27' of histone H3 (H3K27me). H2AK119Ub by RNF2/RING2 can also be induced by ultraviolet and may be involved in DNA repair. Following DNA double-strand breaks (DSBs), it is ubiquitinated through 'Lys-63' linkage of ubiquitin moieties by the E2 ligase UBE2N and the E3 ligases RNF8 and RNF168, leading to the recruitment of repair proteins to sites of DNA damage. Ubiquitination at Lys-14 and Lys-16 (H2AK13Ub and H2AK15Ub, respectively) in response to DNA damage is initiated by RNF168 that mediates monoubiquitination at these 2 sites, and 'Lys-63'-linked ubiquitin are then conjugated to monoubiquitin; RNF8 is able to extend 'Lys-63'-linked ubiquitin chains in vitro. Deubiquitinated by USP51 at Lys-14 and Lys-16 (H2AK13Ub and H2AK15Ub, respectively) after damaged DNA is repaired. H2AK119Ub and ionizing radiation-induced 'Lys-63'-linked ubiquitination (H2AK13Ub and H2AK15Ub) are distinct events. Phosphorylation on Ser-2 (H2AS1ph) is enhanced during mitosis. Phosphorylation on Ser-2 by RPS6KA5/MSK1 directly represses transcription. Acetylation of H3 inhibits Ser-2 phosphorylation by RPS6KA5/MSK1. Phosphorylation at Thr-121 (H2AT120ph) by DCAF1 is present in the regulatory region of many tumor suppresor genes and down-regulates their transcription. Post-translationally, symmetric dimethylation on Arg-4 by the PRDM1/PRMT5 complex may play a crucial role in the germ-cell lineage. In terms of processing, glutamine methylation at Gln-105 (H2AQ104me) by FBL is specifically dedicated to polymerase I. It is present at 35S ribosomal DNA locus and impairs binding of the FACT complex. Crotonylation (Kcr) is specifically present in male germ cells and marks testis-specific genes in post-meiotic cells, including X-linked genes that escape sex chromosome inactivation in haploid cells. Crotonylation marks active promoters and enhancers and confers resistance to transcriptional repressors. It is also associated with post-meiotically activated genes on autosomes. Post-translationally, hydroxybutyrylation of histones is induced by starvation. In terms of processing, lactylated in macrophages by EP300/P300 by using lactoyl-CoA directly derived from endogenous or exogenous lactate, leading to stimulates gene transcription.

It is found in the nucleus. It localises to the chromosome. Its function is as follows. Core component of nucleosome. Nucleosomes wrap and compact DNA into chromatin, limiting DNA accessibility to the cellular machineries which require DNA as a template. Histones thereby play a central role in transcription regulation, DNA repair, DNA replication and chromosomal stability. DNA accessibility is regulated via a complex set of post-translational modifications of histones, also called histone code, and nucleosome remodeling. This is Histone H2A type 1-K from Mus musculus (Mouse).